A 190-amino-acid polypeptide reads, in one-letter code: Elongation factor P-like protein (190 aa).

This sequence belongs to the elongation factor P family.

The chain is Elongation factor P-like protein from Citrobacter koseri (strain ATCC BAA-895 / CDC 4225-83 / SGSC4696).